A 419-amino-acid chain; its full sequence is BTB/POZ domain-containing protein KCTD20 (419 aa).

The BTB domain occupies 117–191 (EKVTLLVDGT…YKTGIINCPD (75 aa)).

In terms of assembly, interacts with AKT1; AKT2 and AKT3. Associates with PP2CA. Part of a complex containing MARK4.

The protein resides in the cytoplasm. Promotes the phosphorylation of AKT family members. The sequence is that of BTB/POZ domain-containing protein KCTD20 (KCTD20) from Homo sapiens (Human).